The chain runs to 179 residues: ADP-ribosylation factor-like protein 5A (179 aa).

Gly-2 is lipidated: N-myristoyl glycine. Residues 23–30, 66–70, 125–128, and Ala-159 contribute to the GTP site; these read GLDNAGKT, DIGGQ, and NKQD.

Belongs to the small GTPase superfamily. Arf family. In terms of tissue distribution, low amounts were found in most tissues examined with highest levels in brain, intestine and thymus.

Its function is as follows. Lacks ADP-ribosylation enhancing activity. This chain is ADP-ribosylation factor-like protein 5A (Arl5a), found in Rattus norvegicus (Rat).